The sequence spans 782 residues: Sulfate permease family protein 3 (782 aa).

Transmembrane regions (helical) follow at residues 30–52 (YACS…TWLP), 64–84 (LSGG…LASI), 86–106 (GVPP…YIFF), 113–133 (ALGG…KVML), 196–216 (IHVA…MGVF), 232–252 (GFVV…MLGI), 274–294 (LDNV…FLVF), 302–322 (WLNS…VVGI), 359–379 (HIGL…ITVA), 398–418 (ALGF…TSGF), 433–453 (LTCL…GPAL), and 497–517 (FFLT…GFAV). One can recognise an STAS domain in the interval 546 to 700 (KRDLERIQGN…NKVGDAVKAA (155 aa)). Over residues 728–742 (IDEESSDSNDNDDAE) the composition is skewed to acidic residues. A disordered region spans residues 728-782 (IDEESSDSNDNDDAEIQERITEESENSEEVMSETSVSIEDATSLTSSRNSINSEE). The segment covering 767-782 (DATSLTSSRNSINSEE) has biased composition (polar residues).

Belongs to the SLC26A/SulP transporter (TC 2.A.53) family.

The protein localises to the membrane. Functionally, possible sulfate transporter. The protein is Sulfate permease family protein 3 (sulp-3) of Caenorhabditis elegans.